A 399-amino-acid polypeptide reads, in one-letter code: Phosphoglycerate kinase (399 aa).

Residues 21 to 23 (DFN), Arg36, 59 to 62 (HLGR), Arg120, and Arg158 contribute to the substrate site. Residues Lys209, Gly297, Glu328, and 355 to 358 (GGDS) contribute to the ATP site.

The protein belongs to the phosphoglycerate kinase family. As to quaternary structure, monomer.

It is found in the cytoplasm. It carries out the reaction (2R)-3-phosphoglycerate + ATP = (2R)-3-phospho-glyceroyl phosphate + ADP. It functions in the pathway carbohydrate degradation; glycolysis; pyruvate from D-glyceraldehyde 3-phosphate: step 2/5. This Streptococcus thermophilus (strain ATCC BAA-250 / LMG 18311) protein is Phosphoglycerate kinase.